The following is a 449-amino-acid chain: Signal recognition particle protein (449 aa).

GTP is bound by residues G109–T116, D191–R195, and S249–D252.

Belongs to the GTP-binding SRP family. SRP54 subfamily. In terms of assembly, part of the signal recognition particle protein translocation system, which is composed of SRP and FtsY. SRP is a ribonucleoprotein composed of Ffh and a 4.5S RNA molecule.

It localises to the cytoplasm. It catalyses the reaction GTP + H2O = GDP + phosphate + H(+). In terms of biological role, involved in targeting and insertion of nascent membrane proteins into the cytoplasmic membrane. Binds to the hydrophobic signal sequence of the ribosome-nascent chain (RNC) as it emerges from the ribosomes. The SRP-RNC complex is then targeted to the cytoplasmic membrane where it interacts with the SRP receptor FtsY. Interaction with FtsY leads to the transfer of the RNC complex to the Sec translocase for insertion into the membrane, the hydrolysis of GTP by both Ffh and FtsY, and the dissociation of the SRP-FtsY complex into the individual components. This chain is Signal recognition particle protein, found in Rickettsia felis (strain ATCC VR-1525 / URRWXCal2) (Rickettsia azadi).